We begin with the raw amino-acid sequence, 111 residues long: Ribosome-binding factor A (111 aa).

It belongs to the RbfA family. As to quaternary structure, monomer. Binds 30S ribosomal subunits, but not 50S ribosomal subunits or 70S ribosomes.

Its subcellular location is the cytoplasm. In terms of biological role, one of several proteins that assist in the late maturation steps of the functional core of the 30S ribosomal subunit. Associates with free 30S ribosomal subunits (but not with 30S subunits that are part of 70S ribosomes or polysomes). Required for efficient processing of 16S rRNA. May interact with the 5'-terminal helix region of 16S rRNA. This Helicobacter pylori (strain HPAG1) protein is Ribosome-binding factor A.